Reading from the N-terminus, the 123-residue chain is Histone H2B.1/H2B.2 (123 aa).

The interval 1–30 (MPPKVSGKAAKKAGKAQKNITKGDKKKNRK) is disordered. An O-linked (GlcNAc) serine glycan is attached at Ser110. Lys118 is covalently cross-linked (Glycyl lysine isopeptide (Lys-Gly) (interchain with G-Cter in ubiquitin)).

Belongs to the histone H2B family. As to quaternary structure, the nucleosome is a histone octamer containing two molecules each of H2A, H2B, H3 and H4 assembled in one H3-H4 heterotetramer and two H2A-H2B heterodimers. The octamer wraps approximately 147 bp of DNA. Post-translationally, monoubiquitination of Lys-118 gives a specific tag for epigenetic transcriptional activation and is also prerequisite for histone H3 'Lys-4' and 'Lys-79' methylation. GlcNAcylation at Ser-110 promotes monoubiquitination of Lys-118. It fluctuates in response to extracellular glucose, and associates with transcribed genes.

The protein localises to the nucleus. It is found in the chromosome. In terms of biological role, core component of nucleosome. Nucleosomes wrap and compact DNA into chromatin, limiting DNA accessibility to the cellular machineries which require DNA as a template. Histones thereby play a central role in transcription regulation, DNA repair, DNA replication and chromosomal stability. DNA accessibility is regulated via a complex set of post-translational modifications of histones, also called histone code, and nucleosome remodeling. The chain is Histone H2B.1/H2B.2 from Tigriopus californicus (Marine copepod).